A 548-amino-acid polypeptide reads, in one-letter code: Membrane protein insertase YidC (548 aa).

Residues 6 to 26 traverse the membrane as a helical segment; it reads NLLIIALLFVSFMIWQAWEQD. Positions 28-52 are disordered; it reads NPQPQQQTTQTTTTAAGSAADQGVP. Residues 29–41 are compositionally biased toward low complexity; sequence PQPQQQTTQTTTT. Helical transmembrane passes span 345-365, 420-440, 458-478, and 499-519; these read KFIH…TFIV, LGGC…YYML, LSAQ…MFFI, and PVIF…YYIV.

It belongs to the OXA1/ALB3/YidC family. Type 1 subfamily. In terms of assembly, interacts with the Sec translocase complex via SecD. Specifically interacts with transmembrane segments of nascent integral membrane proteins during membrane integration.

It is found in the cell inner membrane. Its function is as follows. Required for the insertion and/or proper folding and/or complex formation of integral membrane proteins into the membrane. Involved in integration of membrane proteins that insert both dependently and independently of the Sec translocase complex, as well as at least some lipoproteins. Aids folding of multispanning membrane proteins. This is Membrane protein insertase YidC from Klebsiella pneumoniae subsp. pneumoniae (strain ATCC 700721 / MGH 78578).